The chain runs to 559 residues: Glucose-6-phosphate isomerase 2 (559 aa).

The active-site Proton donor is the Glu-367. Active-site residues include His-398 and Lys-522.

Belongs to the GPI family.

The protein localises to the cytoplasm. It catalyses the reaction alpha-D-glucose 6-phosphate = beta-D-fructose 6-phosphate. Its pathway is carbohydrate biosynthesis; gluconeogenesis. The protein operates within carbohydrate degradation; glycolysis; D-glyceraldehyde 3-phosphate and glycerone phosphate from D-glucose: step 2/4. In terms of biological role, catalyzes the reversible isomerization of glucose-6-phosphate to fructose-6-phosphate. The polypeptide is Glucose-6-phosphate isomerase 2 (Chromohalobacter salexigens (strain ATCC BAA-138 / DSM 3043 / CIP 106854 / NCIMB 13768 / 1H11)).